The chain runs to 340 residues: Adenosine kinase (340 aa).

Residue aspartate 293 is part of the active site.

The protein belongs to the carbohydrate kinase PfkB family. Monomer. Mg(2+) is required as a cofactor.

It carries out the reaction adenosine + ATP = AMP + ADP + H(+). It functions in the pathway purine metabolism; AMP biosynthesis via salvage pathway; AMP from adenosine: step 1/1. Functionally, ATP dependent phosphorylation of adenosine and other related nucleoside analogs to monophosphate derivatives. The polypeptide is Adenosine kinase (adk) (Dictyostelium discoideum (Social amoeba)).